The sequence spans 1105 residues: SWI/SNF complex subunit SMARCC1 (1105 aa).

The residue at position 2 (Ala-2) is an N-acetylalanine. A marR-like, BRCT and chromo domains module region spans residues Leu-28–Thr-302. One can recognise a MarR-like domain in the interval Pro-38–Cys-164. In terms of domain architecture, BRCT; N-terminus spans Pro-168–Ser-211. Lys-179 participates in a covalent cross-link: Glycyl lysine isopeptide (Lys-Gly) (interchain with G-Cter in SUMO2). The region spanning Glu-217–His-245 is the Chromo domain. The BRCT; C-terminus domain maps to Lys-261–Tyr-285. The tract at residues Phe-296–Glu-439 is disordered. The span at Thr-302 to Ala-318 shows a compositional bias: basic and acidic residues. A phosphoserine mark is found at Ser-310, Ser-328, and Ser-330. Thr-335 carries the post-translational modification Phosphothreonine. N6-acetyllysine is present on residues Lys-345 and Lys-346. Ser-350 carries the phosphoserine modification. N6-acetyllysine is present on Lys-354. Residue Ser-357 is modified to Phosphoserine. Lys-359 carries the N6-acetyllysine; alternate modification. Lys-359 is covalently cross-linked (Glycyl lysine isopeptide (Lys-Gly) (interchain with G-Cter in SUMO2); alternate). Residue Thr-398 is modified to Phosphothreonine. The SWIRM domain maps to Ile-449 to Met-546. Ser-573 bears the Phosphoserine mark. Lys-592 is covalently cross-linked (Glycyl lysine isopeptide (Lys-Gly) (interchain with G-Cter in SUMO2)). Residues Ser-618–Pro-669 form the SANT domain. Residue Lys-739 forms a Glycyl lysine isopeptide (Lys-Gly) (interchain with G-Cter in SUMO2) linkage. Residues Ala-745–Glu-860 are disordered. The segment covering Ala-776–Pro-785 has biased composition (acidic residues). The span at Gln-789–Glu-860 shows a compositional bias: basic and acidic residues. Lys-796 participates in a covalent cross-link: Glycyl lysine isopeptide (Lys-Gly) (interchain with G-Cter in SUMO2). Phosphoserine occurs at positions 822 and 825. Residues Lys-829 and Lys-856 each participate in a glycyl lysine isopeptide (Lys-Gly) (interchain with G-Cter in SUMO2) cross-link. Residues Phe-914–Gln-946 are a coiled coil. Lys-948 is subject to N6-acetyllysine. 2 disordered regions span residues Gln-956–His-1028 and Ile-1041–Pro-1105. The span at Gln-957–His-993 shows a compositional bias: low complexity. Pro residues-rich tracts occupy residues Gln-994–Ile-1017 and Pro-1048–Pro-1057. Residue Arg-1064 is modified to Asymmetric dimethylarginine. Over residues Met-1073–Pro-1105 the composition is skewed to pro residues.

The protein belongs to the SMARCC family. In terms of assembly, component of the multiprotein chromatin-remodeling complexes SWI/SNF: SWI/SNF-A (BAF), SWI/SNF-B (PBAF) and related complexes. The canonical complex contains a catalytic subunit (either SMARCA4/BRG1/BAF190A or SMARCA2/BRM/BAF190B) and at least SMARCE1, ACTL6A/BAF53, SMARCC1/BAF155, SMARCC2/BAF170, and SMARCB1/SNF5/BAF47. Other subunits specific to each of the complexes may also be present permitting several possible combinations developmentally and tissue specific. Component of the BAF complex, which includes at least actin (ACTB), ARID1A/BAF250A, ARID1B/BAF250B, SMARCA2/BRM, SMARCA4/BRG1, ACTL6A/BAF53, ACTL6B/BAF53B, SMARCE1/BAF57, SMARCC1/BAF155, SMARCC2/BAF170, SMARCB1/SNF5/INI1, and one or more SMARCD1/BAF60A, SMARCD2/BAF60B, or SMARCD3/BAF60C. In muscle cells, the BAF complex also contains DPF3. Component of neural progenitors-specific chromatin remodeling complex (npBAF complex) composed of at least, ARID1A/BAF250A or ARID1B/BAF250B, SMARCD1/BAF60A, SMARCD3/BAF60C, SMARCA2/BRM/BAF190B, SMARCA4/BRG1/BAF190A, SMARCB1/BAF47, SMARCC1/BAF155, SMARCE1/BAF57, SMARCC2/BAF170, PHF10/BAF45A, ACTL6A/BAF53A and actin. Component of neuron-specific chromatin remodeling complex (nBAF complex) composed of at least, ARID1A/BAF250A or ARID1B/BAF250B, SMARCD1/BAF60A, SMARCD3/BAF60C, SMARCA2/BRM/BAF190B, SMARCA4/BRG1/BAF190A, SMARCB1/BAF47, SMARCC1/BAF155, SMARCE1/BAF57, SMARCC2/BAF170, DPF1/BAF45B, DPF3/BAF45C, ACTL6B/BAF53B and actin. Component of the SWI/SNF-B (PBAF) chromatin remodeling complex, at least composed of SMARCA4/BRG1, SMARCB1/BAF47/SNF5, ACTL6A/BAF53A or ACTL6B/BAF53B, SMARCE1/BAF57, SMARCD1/BAF60A, SMARCD2/BAF60B, perhaps SMARCD3/BAF60C, SMARCC1/BAF155, SMARCC2/BAF170, PBRM1/BAF180, ARID2/BAF200 and actin. Component of SWI/SNF (GBAF) subcomplex, which includes at least BICRA or BICRAL (mutually exclusive), BRD9, SS18, SMARCA2/BRM, SMARCA4/BRG1/BAF190A, ACTL6A/BAF53, SMARCC1/BAF155, and SMARCD1/BAF60A. May also interact with the SIN3A histone deacetylase transcription repressor complex in conjunction with SMARCA2 and SMARCA4. The minimal complex composed of SMARCC1 and SMARCA4 seems to be able to associate with cyclin such as CCNE1 or transcription factors such as KLF1 or GATA1. Interacts with NR3C1 and SMARD1. Interacts with TRIP12; leading to disrupt interaction between TRIP12 and SMARCE1 and prevent SMARCE1 ubiquitination. Interacts with CEBPB (when not methylated). Interacts with KDM6B. Interacts with MKKS; the interaction takes place predominantly in the cytoplasm and may modulate SMARCC1 location. Interacts with DPF2. Interacts with PRDM1/BLIMP1. Interacts with DPF3a (isoform 2 of DPF3/BAF45C) and with HDGFL2 in a DPF3a-dependent manner. Post-translationally, phosphorylated on undefined residues at the G2/M transition by ERK1 and other kinases. This may contribute to cell cycle specific inactivation of remodeling complexes containing the phosphorylated protein. Expressed in brain, heart, muscle, placenta, lung, liver, muscle, kidney and pancreas.

Its subcellular location is the nucleus. The protein localises to the cytoplasm. In terms of biological role, involved in transcriptional activation and repression of select genes by chromatin remodeling (alteration of DNA-nucleosome topology). Component of SWI/SNF chromatin remodeling complexes that carry out key enzymatic activities, changing chromatin structure by altering DNA-histone contacts within a nucleosome in an ATP-dependent manner. May stimulate the ATPase activity of the catalytic subunit of the complex. Belongs to the neural progenitors-specific chromatin remodeling complex (npBAF complex) and the neuron-specific chromatin remodeling complex (nBAF complex). During neural development a switch from a stem/progenitor to a postmitotic chromatin remodeling mechanism occurs as neurons exit the cell cycle and become committed to their adult state. The transition from proliferating neural stem/progenitor cells to postmitotic neurons requires a switch in subunit composition of the npBAF and nBAF complexes. As neural progenitors exit mitosis and differentiate into neurons, npBAF complexes which contain ACTL6A/BAF53A and PHF10/BAF45A, are exchanged for homologous alternative ACTL6B/BAF53B and DPF1/BAF45B or DPF3/BAF45C subunits in neuron-specific complexes (nBAF). The npBAF complex is essential for the self-renewal/proliferative capacity of the multipotent neural stem cells. The nBAF complex along with CREST plays a role regulating the activity of genes essential for dendrite growth. This chain is SWI/SNF complex subunit SMARCC1, found in Homo sapiens (Human).